Here is a 274-residue protein sequence, read N- to C-terminus: Large ribosomal subunit protein uL2cz/uL2cy (274 aa).

2 disordered regions span residues 1–22 (MAIHLYKTSTPSTRNGAVDSQV) and 225–274 (PVDH…RRSK).

This sequence belongs to the universal ribosomal protein uL2 family. Part of the 50S ribosomal subunit.

The protein resides in the plastid. Its subcellular location is the chloroplast. The protein is Large ribosomal subunit protein uL2cz/uL2cy (rpl2-A) of Arabis hirsuta (Hairy rock-cress).